Reading from the N-terminus, the 263-residue chain is Homeobox protein CDX-1 (263 aa).

Positions 47 to 108 (PGINSDPHHG…VQPPGSGLLP (62 aa)) are disordered. Residues 82 to 97 (SSANPTQIAFSPSDYN) show a composition bias toward polar residues. The homeobox DNA-binding region spans 150–209 (KDKYRVVYTDHQRLELEKEFHYSRYITIRRKAELAAALGLTERQVKIWFQNRRAKERKVN). Residues 153-174 (YRVVYTDHQRLELEKEFHYSRY) are interaction with DNA. Positions 192 to 203 (RQVKIWFQNRRA) are interaction with 5-mCpG DNA. Over residues 204-213 (KERKVNKKKM) the composition is skewed to basic residues. The tract at residues 204–263 (KERKVNKKKMQQQSQQASTTTPTPPSVGTTAGMGGLCSSSSSNSNLVSPSSMPIKEEYLS) is disordered. Composition is skewed to low complexity over residues 214–233 (QQQSQQASTTTPTPPSVGTT) and 241–254 (SSSSSNSNLVSPSS).

The protein belongs to the Caudal homeobox family.

The protein resides in the nucleus. Functionally, plays a role in transcriptional regulation. Involved in activated KRAS-mediated transcriptional activation of PRKD1. Binds to the PRKD1 promoter. Could play a role in the terminal differentiation of the intestine. Binds preferentially to methylated DNA. The sequence is that of Homeobox protein CDX-1 (cdx1) from Xenopus laevis (African clawed frog).